A 172-amino-acid chain; its full sequence is uncharacterized protein (172 aa).

Residues 109-129 (MLLLYLYYNLLLLTASTPLTF) form a helical membrane-spanning segment.

The protein resides in the membrane. This is an uncharacterized protein from Saccharomyces cerevisiae (strain ATCC 204508 / S288c) (Baker's yeast).